The following is a 118-amino-acid chain: T cell receptor gamma variable 2 (118 aa).

The N-terminal stretch at 1–17 (MQWALAVLLAFLSPASQ) is a signal peptide. The Ig-like domain occupies 18–118 (KSSNLEGRTK…GVYYCATWDG (101 aa)). Residues cysteine 41 and cysteine 113 are joined by a disulfide bond.

Gamma-delta TR is a heterodimer composed of a gamma and delta chain; disulfide-linked. The gamma-delta TR is associated with the transmembrane signaling CD3 coreceptor proteins following the stoichiometry: a single gamma-delta TR heterodimer associates with one CD3D-CD3E heterodimer, one CD3G-CD3E heterodimer and one CD247 homodimer forming a stable octameric structure. Upon activation, gamma-delta TR complex associates with FCER1G to initiate intracellular signaling.

The protein localises to the cell membrane. Functionally, v region of the variable domain of T cell receptor (TR) gamma chain that participates in the antigen recognition. Gamma-delta TRs recognize a variety of self and foreign non-peptide antigens frequently expressed at the epithelial boundaries between the host and external environment, including endogenous lipids presented by MH-like protein CD1D and phosphoantigens presented by butyrophilin-like molecule BTN3A1. Upon antigen recognition induces rapid, innate-like immune responses involved in pathogen clearance and tissue repair. Binding of gamma-delta TR complex to antigen triggers phosphorylation of immunoreceptor tyrosine-based activation motifs (ITAMs) in the CD3 chains by the LCK and FYN kinases, allowing the recruitment, phosphorylation, and activation of ZAP70 that facilitates phosphorylation of the scaffolding proteins LCP2 and LAT. This lead to the formation of a supramolecular signalosome that recruits the phospholipase PLCG1, resulting in calcium mobilization and ERK activation, ultimately leading to T cell expansion and differentiation into effector cells. Gamma-delta TRs are produced through somatic rearrangement of a limited repertoire of variable (V), diversity (D), and joining (J) genes. The potential diversity of gamma-delta TRs is conferred by the unique ability to rearrange (D) genes in tandem and to utilize all three reading frames. The combinatorial diversity is considerably increased by the sequence exonuclease trimming and random nucleotide (N) region additions which occur during the V-(D)-J rearrangements. In Homo sapiens (Human), this protein is T cell receptor gamma variable 2.